Consider the following 301-residue polypeptide: 3-methyl-2-oxobutanoate hydroxymethyltransferase (301 aa).

Residues 1-28 are compositionally biased toward low complexity; the sequence is MATSNSSDSSMSAEVPAPYGNGPANAPA. The segment at 1 to 37 is disordered; sequence MATSNSSDSSMSAEVPAPYGNGPANAPATPSDTAKKP. Mg(2+) is bound by residues D82 and D121. 3-methyl-2-oxobutanoate-binding positions include 82–83, D121, and K151; that span reads DS. E153 contacts Mg(2+). The Proton acceptor role is filled by E219.

It belongs to the PanB family. As to quaternary structure, homodecamer; pentamer of dimers. Requires Mg(2+) as cofactor.

Its subcellular location is the cytoplasm. The catalysed reaction is 3-methyl-2-oxobutanoate + (6R)-5,10-methylene-5,6,7,8-tetrahydrofolate + H2O = 2-dehydropantoate + (6S)-5,6,7,8-tetrahydrofolate. The protein operates within cofactor biosynthesis; (R)-pantothenate biosynthesis; (R)-pantoate from 3-methyl-2-oxobutanoate: step 1/2. Catalyzes the reversible reaction in which hydroxymethyl group from 5,10-methylenetetrahydrofolate is transferred onto alpha-ketoisovalerate to form ketopantoate. This chain is 3-methyl-2-oxobutanoate hydroxymethyltransferase, found in Arthrobacter sp. (strain FB24).